The chain runs to 96 residues: Prokineticin Bv8-like peptide 2 (96 aa).

An N-terminal signal peptide occupies residues 1-19 (MKCFAQIVVLLLVIAFSHG). Intrachain disulfides connect cysteine 26–cysteine 38, cysteine 32–cysteine 50, cysteine 37–cysteine 78, cysteine 60–cysteine 86, and cysteine 80–cysteine 95.

It belongs to the AVIT (prokineticin) family. Expressed by the skin glands.

The protein localises to the secreted. Its function is as follows. Potent agonist for both PKR1/PROKR1 and PKR2/PROKR2, and inducer of a potent and long-lasting hyperalgesia. Also potentiates capsaicin-induced TRPV1 current when tested on DRG neurons. At subnanomolar concentrations, this protein both induces potent chemotaxis of macrophages and stimulates LPS-induced production of the pro-inflammatory cytokines IL-1 and IL-12. In vivo, potently stimulates the contraction of the guinea-pig gastrointestinal (GI) smooth muscle (nanomolar concentration) and rabbit aortic rings. This Bombina maxima (Giant fire-bellied toad) protein is Prokineticin Bv8-like peptide 2.